The sequence spans 318 residues: MKPLNIIFAGTPDFAARHLQALINSHHNVIAVYTQPDRPAGRGKKLTASPVKELAVSHDIPVYQPGSLRKEPAQQELAALNADIMVVVAYGLILPKVVLDTPRLGCINVHGSILPRWRGAAPIQRALWAGDKETGVTIMQMDVGLDTGDMLLKTYLPIEDDDTSATLYEKLAQQGPDALLQALEGLANGTLTAEKQDEALANYAEKLSKEEARLDWSKSATQLWQEVRAFNPWPVSYFEHQGNTIKVWQTQISTTSSNAAPGTIISASKKGIEVATGDGVLTLLSMQLPGKKPLSVADILNARGDWFTPNTRLNNEAQ.

112–115 (SILP) contacts (6S)-5,6,7,8-tetrahydrofolate.

The protein belongs to the Fmt family.

It carries out the reaction L-methionyl-tRNA(fMet) + (6R)-10-formyltetrahydrofolate = N-formyl-L-methionyl-tRNA(fMet) + (6S)-5,6,7,8-tetrahydrofolate + H(+). Functionally, attaches a formyl group to the free amino group of methionyl-tRNA(fMet). The formyl group appears to play a dual role in the initiator identity of N-formylmethionyl-tRNA by promoting its recognition by IF2 and preventing the misappropriation of this tRNA by the elongation apparatus. The protein is Methionyl-tRNA formyltransferase of Shewanella sp. (strain MR-7).